Reading from the N-terminus, the 296-residue chain is Glycine N-acyltransferase (296 aa).

3 positions are modified to N6-acetyllysine; alternate: Lys16, Lys127, and Lys141. 3 positions are modified to N6-succinyllysine; alternate: Lys16, Lys127, and Lys141. Lys159 carries the N6-acetyllysine modification. Lys169 is modified (N6-succinyllysine). 2 positions are modified to N6-acetyllysine; alternate: Lys183 and Lys256. An N6-succinyllysine; alternate mark is found at Lys183 and Lys256.

It belongs to the glycine N-acyltransferase family.

It localises to the mitochondrion. It carries out the reaction an acyl-CoA + glycine = an N-acylglycine + CoA + H(+). It catalyses the reaction benzoyl-CoA + glycine = N-benzoylglycine + CoA + H(+). Functionally, mitochondrial acyltransferase which transfers an acyl group to the N-terminus of glycine and glutamine, although much less efficiently. Can conjugate a multitude of substrates to form a variety of N-acylglycines, thereby detoxify xenobiotics, such as benzoic acid or salicylic acid, and endogenous organic acids, such as isovaleric acid. The sequence is that of Glycine N-acyltransferase (GLYAT) from Pongo abelii (Sumatran orangutan).